A 284-amino-acid polypeptide reads, in one-letter code: NH(3)-dependent NAD(+) synthetase (284 aa).

51 to 58 (GISGGIDS) is an ATP binding site. Asp-57 provides a ligand contact to Mg(2+). Arg-148 is a deamido-NAD(+) binding site. Residue Thr-168 coordinates ATP. Glu-173 contacts Mg(2+). Deamido-NAD(+) contacts are provided by Lys-181 and Asp-188. Positions 197 and 219 each coordinate ATP. 268–269 (HK) serves as a coordination point for deamido-NAD(+).

Belongs to the NAD synthetase family. In terms of assembly, homodimer.

It carries out the reaction deamido-NAD(+) + NH4(+) + ATP = AMP + diphosphate + NAD(+) + H(+). It participates in cofactor biosynthesis; NAD(+) biosynthesis; NAD(+) from deamido-NAD(+) (ammonia route): step 1/1. In terms of biological role, catalyzes the ATP-dependent amidation of deamido-NAD to form NAD. Uses ammonia as a nitrogen source. This Burkholderia pseudomallei (strain 1106a) protein is NH(3)-dependent NAD(+) synthetase.